Consider the following 817-residue polypeptide: Verprolin (817 aa).

Positions 1-15 are enriched in pro residues; the sequence is MAGAPAPPPPPPPPA. The interval 1 to 752 is disordered; the sequence is MAGAPAPPPP…THTNQPDVDV (752 aa). A WH2 1 domain is found at 30–47; that stretch reads GRDALLGDIRKGMKLKKA. Over residues 37-51 the composition is skewed to basic and acidic residues; it reads DIRKGMKLKKAETND. A compositionally biased stretch (low complexity) spans 62 to 79; the sequence is VSSASGSSGTVSSKGPSM. A WH2 2 domain is found at 87–106; the sequence is MGAPQLGDILAGGIPKLKHI. N-linked (GlcNAc...) asparagine glycosylation is present at asparagine 109. Over residues 119–180 the composition is skewed to pro residues; sequence SAPPIPGAVP…VPSSPAPPLP (62 aa). A glycan (N-linked (GlcNAc...) asparagine) is linked at asparagine 212. Pro residues predominate over residues 236 to 245; that stretch reads PQAPPPPPTP. Residues 254–265 show a composition bias toward polar residues; that stretch reads IKPTDNAVSPPS. Residues 306-335 show a composition bias toward pro residues; that stretch reads SQPPLPSSAPPIPTSHAPPLPPTAPPPPSL. Over residues 336 to 348 the composition is skewed to low complexity; it reads PNVTSAPKKATSA. Asparagine 337 is a glycosylation site (N-linked (GlcNAc...) asparagine). Pro residues predominate over residues 372–382; the sequence is PVPPTLAPPLP. The N-linked (GlcNAc...) asparagine glycan is linked to asparagine 383. The segment covering 383–395 has biased composition (low complexity); that stretch reads NTTSVPPNKASSM. Residues 396–407 show a composition bias toward pro residues; it reads PAPPPPPPPPPG. Residues 408–422 show a composition bias toward low complexity; that stretch reads AFSTSSALSASSIPL. A compositionally biased stretch (pro residues) spans 423-432; the sequence is APLPPPPPPS. The segment covering 447–469 has biased composition (low complexity); it reads LTTNKPSASSKQSKISSSSSSSA. A compositionally biased stretch (basic and acidic residues) spans 502–516; the sequence is DKQEDVIGSSKDDNV. The segment covering 518-534 has biased composition (low complexity); it reads PSPISPSINPPKQSSQN. At serine 519 the chain carries Phosphoserine. A compositionally biased stretch (pro residues) spans 557–579; the sequence is APPPHTDAMAPPLPPSAPPPPIT. The segment covering 588–597 has biased composition (basic and acidic residues); the sequence is GDDHTNDKSE. A compositionally biased stretch (pro residues) spans 649-661; that stretch reads PPSPPVAAAPPLP. The span at 713–737 shows a compositional bias: polar residues; it reads MDTGTSNSPSKNLKQRLFSTGGSTL. Serine 762 is subject to Phosphoserine. Residues asparagine 784 and asparagine 796 are each glycosylated (N-linked (GlcNAc...) asparagine). A disordered region spans residues 786–806; sequence SQMPKPRPFQNKTKLYPSGKG.

The protein belongs to the verprolin family. In terms of processing, N-glycosylated.

The protein localises to the cytoplasm. The protein resides in the cytoskeleton. Functionally, involved in cytoskeletal organization and cellular growth. May exert its effects on the cytoskeleton directly, or indirectly via proline-binding proteins (e.g. profilin) or proteins possessing SH3 domains. In Saccharomyces cerevisiae (strain ATCC 204508 / S288c) (Baker's yeast), this protein is Verprolin (VRP1).